Reading from the N-terminus, the 139-residue chain is Large ribosomal subunit protein uL16 (139 aa).

Residues 1 to 17 (MLIPRKVKHRKQHHPGR) are compositionally biased toward basic residues. A disordered region spans residues 1-24 (MLIPRKVKHRKQHHPGRTGHATGG).

This sequence belongs to the universal ribosomal protein uL16 family. In terms of assembly, part of the 50S ribosomal subunit.

In terms of biological role, binds 23S rRNA and is also seen to make contacts with the A and possibly P site tRNAs. The sequence is that of Large ribosomal subunit protein uL16 from Clavibacter michiganensis subsp. michiganensis (strain NCPPB 382).